A 393-amino-acid polypeptide reads, in one-letter code: NAD(P)H-quinone oxidoreductase subunit H, chloroplastic (393 aa).

This sequence belongs to the complex I 49 kDa subunit family. In terms of assembly, NDH is composed of at least 16 different subunits, 5 of which are encoded in the nucleus.

The protein localises to the plastid. It is found in the chloroplast thylakoid membrane. It catalyses the reaction a plastoquinone + NADH + (n+1) H(+)(in) = a plastoquinol + NAD(+) + n H(+)(out). It carries out the reaction a plastoquinone + NADPH + (n+1) H(+)(in) = a plastoquinol + NADP(+) + n H(+)(out). In terms of biological role, NDH shuttles electrons from NAD(P)H:plastoquinone, via FMN and iron-sulfur (Fe-S) centers, to quinones in the photosynthetic chain and possibly in a chloroplast respiratory chain. The immediate electron acceptor for the enzyme in this species is believed to be plastoquinone. Couples the redox reaction to proton translocation, and thus conserves the redox energy in a proton gradient. In Solanum tuberosum (Potato), this protein is NAD(P)H-quinone oxidoreductase subunit H, chloroplastic.